A 379-amino-acid polypeptide reads, in one-letter code: Cinnamyl alcohol dehydrogenase 7 (379 aa).

Positions 1–13 (MAPTTTATAAAEQ) are enriched in low complexity. The interval 1 to 21 (MAPTTTATAAAEQAPPPQHTR) is disordered. Cys-60 contacts Zn(2+). Position 62 (Ser-62) interacts with NADP(+). Positions 82, 83, 113, 116, 119, 127, and 185 each coordinate Zn(2+). NADP(+) is bound by residues Thr-189, 210–215 (GLGGLG), 233–238 (STSPVK), Thr-273, Gly-297, and 320–322 (SCM).

This sequence belongs to the zinc-containing alcohol dehydrogenase family. As to quaternary structure, homodimer. The cofactor is Zn(2+). In terms of tissue distribution, expressed in roots, first internodes and panicles. Expressed in the vascular bundles and sclerenchyma cells below the epidermis in leaves and stems.

The catalysed reaction is (E)-cinnamyl alcohol + NADP(+) = (E)-cinnamaldehyde + NADPH + H(+). It carries out the reaction (E)-coniferol + NADP(+) = (E)-coniferaldehyde + NADPH + H(+). It catalyses the reaction (E)-sinapyl alcohol + NADP(+) = (E)-sinapaldehyde + NADPH + H(+). The enzyme catalyses (E)-4-coumaroyl alcohol + NADP(+) = (E)-4-coumaraldehyde + NADPH + H(+). The catalysed reaction is (E)-caffeyl alcohol + NADP(+) = (E)-caffeyl aldehyde + NADPH + H(+). The protein operates within aromatic compound metabolism; phenylpropanoid biosynthesis. Its function is as follows. Involved in lignin biosynthesis. May catalyze the final step specific for the production of lignin monomers, like coniferyl alcohol, sinapyl alcohol and 4-coumaryl alcohol. This chain is Cinnamyl alcohol dehydrogenase 7, found in Oryza sativa subsp. japonica (Rice).